The chain runs to 302 residues: Putative gluconeogenesis factor (302 aa).

The protein belongs to the gluconeogenesis factor family.

It localises to the cytoplasm. In terms of biological role, required for morphogenesis under gluconeogenic growth conditions. The sequence is that of Putative gluconeogenesis factor (ybhK) from Escherichia coli O157:H7.